The primary structure comprises 953 residues: Translation initiation factor IF-2 (953 aa).

2 disordered regions span residues 48–212 and 279–367; these read SSFS…KIDF and TKLK…FHEL. Basic and acidic residues-rich tracts occupy residues 80 to 89, 98 to 111, and 140 to 188; these read TGSEHVEKTQ, FKAEREARAKEQAA, and QGDK…ENHK. 2 stretches are compositionally biased toward polar residues: residues 191-207 and 282-291; these read RFTNQKKQGRQEPQSKS and KSSNISAKST. Residues 300-317 show a composition bias toward basic and acidic residues; sequence ARPEKNRELTHHSQEGQK. A compositionally biased stretch (low complexity) spans 322–338; sequence SWNSQNQVRNQKNSNWN. Basic residues predominate over residues 339-348; it reads KNKKTKKGKN. One can recognise a tr-type G domain in the interval 454-623; sequence ERAPVVTIMG…LLVAEVEELK (170 aa). Positions 463–470 are G1; sequence GHVDHGKT. Residue 463-470 coordinates GTP; the sequence is GHVDHGKT. The tract at residues 488–492 is G2; it reads GITQH. The G3 stretch occupies residues 509–512; the sequence is DTPG. GTP-binding positions include 509-513 and 563-566; these read DTPGH and NKID. Residues 563-566 form a G4 region; it reads NKID. A G5 region spans residues 599–601; the sequence is SAK.

Belongs to the TRAFAC class translation factor GTPase superfamily. Classic translation factor GTPase family. IF-2 subfamily.

It is found in the cytoplasm. In terms of biological role, one of the essential components for the initiation of protein synthesis. Protects formylmethionyl-tRNA from spontaneous hydrolysis and promotes its binding to the 30S ribosomal subunits. Also involved in the hydrolysis of GTP during the formation of the 70S ribosomal complex. This chain is Translation initiation factor IF-2, found in Streptococcus pyogenes serotype M3 (strain ATCC BAA-595 / MGAS315).